We begin with the raw amino-acid sequence, 278 residues long: Inner membrane mitoribosome receptor MBA1, mitochondrial (278 aa).

The transit peptide at 1-33 (MSVLRSTCLFFPPRSLLISFNKRRLFSTSRLIL) directs the protein to the mitochondrion.

As to quaternary structure, interacts with OXA1 and MDM38. Binds to mitoribosomes in order to recruit them to the mitochondrial inner membrane.

It is found in the mitochondrion inner membrane. Mitochondrial inner membrane-associated mitoribosome receptor that spatially aligns the mitoribosome exit tunnel with the membrane insertion machinery and allows cotranslational protein membrane insertion. The protein is Inner membrane mitoribosome receptor MBA1, mitochondrial of Saccharomyces cerevisiae (strain ATCC 204508 / S288c) (Baker's yeast).